Consider the following 210-residue polypeptide: MRRVFCVLYMPIMSTAIRLIAGLGNPGPDYETTRHNAGFWLADHLADDLRATFALEKSFFGMVAKARHAGENVLLVKPITYMNRSGQAVGALARFYKLAPEQVLVLHDELDLLPGQVKLKQGGGHAGHNGLKDIQAALGSPNFWRLRIGIGHPRTLGLAQQVADFVLHPPRRDEQTAIDDVIHRCRAVVPAMLDGDFALATRQLHSGNGA.

Residue Tyr-30 coordinates tRNA. His-35 (proton acceptor) is an active-site residue. Tyr-81, Asn-83, and Asn-129 together coordinate tRNA.

It belongs to the PTH family. In terms of assembly, monomer.

The protein localises to the cytoplasm. It catalyses the reaction an N-acyl-L-alpha-aminoacyl-tRNA + H2O = an N-acyl-L-amino acid + a tRNA + H(+). Hydrolyzes ribosome-free peptidyl-tRNAs (with 1 or more amino acids incorporated), which drop off the ribosome during protein synthesis, or as a result of ribosome stalling. Its function is as follows. Catalyzes the release of premature peptidyl moieties from peptidyl-tRNA molecules trapped in stalled 50S ribosomal subunits, and thus maintains levels of free tRNAs and 50S ribosomes. The protein is Peptidyl-tRNA hydrolase of Bordetella petrii (strain ATCC BAA-461 / DSM 12804 / CCUG 43448).